Reading from the N-terminus, the 166-residue chain is Sperm-egg fusion protein TMEM95 (166 aa).

An N-terminal signal peptide occupies residues 1 to 16; sequence MWTLALGGIFLAAVEA. Cystine bridges form between Cys-17-Cys-118, Cys-20-Cys-121, Cys-105-Cys-128, and Cys-109-Cys-134. At 17–145 the chain is on the extracellular side; sequence CVFCRFPDRE…PGSHDLWEAR (129 aa). An N-linked (GlcNAc...) asparagine glycan is attached at Asn-117. The chain crosses the membrane as a helical span at residues 146-165; that stretch reads ILLLFVCGTALLLGVPSLAV. A topological domain (cytoplasmic) is located at residue Glu-166.

Belongs to the TMEM95 family. In terms of assembly, does not interact with sperm-egg fusion proteins IZUMO1 or IZUMO1R/JUNO. N-glycosylated. As to expression, detected in testis and brain with higher levels in brain than testis.

It is found in the cytoplasmic vesicle. The protein localises to the secretory vesicle. Its subcellular location is the acrosome membrane. Functionally, sperm protein required for fusion of sperm with the egg membrane during fertilization. In Bos taurus (Bovine), this protein is Sperm-egg fusion protein TMEM95.